Here is a 159-residue protein sequence, read N- to C-terminus: 3-hydroxyacyl-[acyl-carrier-protein] dehydratase FabZ (159 aa).

His-58 is an active-site residue.

It belongs to the thioester dehydratase family. FabZ subfamily.

It localises to the cytoplasm. It carries out the reaction a (3R)-hydroxyacyl-[ACP] = a (2E)-enoyl-[ACP] + H2O. Functionally, involved in unsaturated fatty acids biosynthesis. Catalyzes the dehydration of short chain beta-hydroxyacyl-ACPs and long chain saturated and unsaturated beta-hydroxyacyl-ACPs. In Helicobacter pylori (strain ATCC 700392 / 26695) (Campylobacter pylori), this protein is 3-hydroxyacyl-[acyl-carrier-protein] dehydratase FabZ.